The following is a 156-amino-acid chain: Cellulose synthase operon protein D (156 aa).

The protein operates within glycan metabolism; bacterial cellulose biosynthesis. In terms of biological role, may have a major role in the perfection of crystallization, involved either in the pore structure itself or in the organization of the pores within the linear array of terminal synthesizing complexes (TCs). This is Cellulose synthase operon protein D (bcsDI) from Komagataeibacter xylinus (Gluconacetobacter xylinus).